The following is a 217-amino-acid chain: RING-H2 finger protein ATL40 (217 aa).

Residues 28–48 (IFLVTTVSFSIIIIIVFVYYL) traverse the membrane as a helical segment. An RING-type; atypical zinc finger spans residues 100-142 (CAVCLSLLEEKDNARMLPNCKHVFHVSCVDTWLTTQSTCPVCR). Composition is skewed to basic and acidic residues over residues 143–160 (TEAE…REGP) and 186–217 (DSFR…IERQ). The interval 143–217 (TEAEPSHPRL…QDRELDIERQ (75 aa)) is disordered.

This sequence belongs to the RING-type zinc finger family. ATL subfamily.

Its subcellular location is the membrane. It catalyses the reaction S-ubiquitinyl-[E2 ubiquitin-conjugating enzyme]-L-cysteine + [acceptor protein]-L-lysine = [E2 ubiquitin-conjugating enzyme]-L-cysteine + N(6)-ubiquitinyl-[acceptor protein]-L-lysine.. Its pathway is protein modification; protein ubiquitination. The sequence is that of RING-H2 finger protein ATL40 (ATL40) from Arabidopsis thaliana (Mouse-ear cress).